The following is a 168-amino-acid chain: Pheromone-binding protein (168 aa).

An N-terminal signal peptide occupies residues 1–26 (MNKTTTKMKVAVVAIVVYLAVGNVDS). Cystine bridges form between C45–C80, C76–C134, and C123–C143.

This sequence belongs to the PBP/GOBP family. Homodimer. As to expression, antenna.

In terms of biological role, this major soluble protein in olfactory sensilla of male moths might serve to solubilize the extremely hydrophobic pheromone molecules and to transport pheromone through the aqueous lymph to receptors located on olfactory cilia. PBP is also found in sensilla from female M.sexta antennae. In Manduca sexta (Tobacco hawkmoth), this protein is Pheromone-binding protein.